Here is a 330-residue protein sequence, read N- to C-terminus: D-lactate dehydrogenase (330 aa).

Residues 156-157, D176, 206-207, 233-235, and D259 contribute to the NAD(+) site; these read RI, VP, and AAR. R235 is an active-site residue. The active site involves E264. H296 acts as the Proton donor in catalysis.

The protein belongs to the D-isomer specific 2-hydroxyacid dehydrogenase family.

The catalysed reaction is (R)-lactate + NAD(+) = pyruvate + NADH + H(+). The protein is D-lactate dehydrogenase (ldhD) of Staphylococcus aureus.